A 562-amino-acid polypeptide reads, in one-letter code: mRNA cleavage and polyadenylation factor CLP1 (562 aa).

Residues 1–27 are disordered; the sequence is MSLPGLELSQQPIEARRAPPQPTQISL. Residues Glu-32, Lys-71, and 154-159 contribute to the ATP site; that span reads DAGKTS. Residues 415–483 form a disordered region; sequence EDEYDPSKFD…STTPFTNLPS (69 aa). Low complexity predominate over residues 445 to 479; it reads SLQPPSGLLPGLRSELPSATTGFPSASTSSTTPFT.

This sequence belongs to the Clp1 family. Clp1 subfamily. Component of a pre-mRNA cleavage factor complex. Interacts directly with PCF11.

Its subcellular location is the nucleus. In terms of biological role, required for endonucleolytic cleavage during polyadenylation-dependent pre-mRNA 3'-end formation. The polypeptide is mRNA cleavage and polyadenylation factor CLP1 (Coccidioides immitis (strain RS) (Valley fever fungus)).